The primary structure comprises 867 residues: MTTSATSGTGPADPAGPTENSMRRALKRARDGVALDASEAAVLLQARGAHLDALTASAARVRDAGLEAAGRPGVITYSKSVFVPLTRLCRDKCHYCTFVTVPGKLRRAGHGMFMSPDEVLDIARKGAALGCKEALITLGDKPEDRWPEAREWLDAHGYDDTIAYVRAVSIRILEETGLLPHLNPGVMTWTDFQRLKPVAPSMGMMLETTATRLWSEPGGPHHGSPDKEPAVRLRVLEDAGRSSVPFTSGILIGIGETYEERAESLFALRRVSRSYHGIQELIIQNFRAKPDTAMRGMPDAELDELVAAVAVARHIMGPSACLQAPPNLVDAEYERLIGAGIDDWGGVSPLTIDHVNPERPWPQIDELAATSRAAGFELRERLCVYPEFVRRGEPWLDPRLRPHVAALADPETGLAREDAVVEGHAWQEPDEAFTATGRTDLHATIDTEGRTSDRRDDFDEVYGDWGALREAAAPGMAPERIDTDVRAALATAADDPTKLTDDEALALLHAEGPALDALCGIADDVRRSVVGDDVTYIVTRNINFTNVCYTGCRFCAFAQRRTDADAYTLSLDQVADRAQQAWEVGAVEVCMQGGIHPDLPGTAYFDIARAVKERVPGMHVHAFSPMEVVNGATRTGLSIREWLTAAKEAGLDSVPGTAAEILDDEVRWILTKGKLPAATWIEVIETAHELGIRSSSTMMYGHVDQPRHWLGHLRTLAGIQRRTGGFTEFVTLPFIHTNAPVYLAGIARPGPTLRDNRAVTAMARLLLHPHIPNIQTSWVKLGTEGAAEMLRSGANDLGGTLMEETISRMAGSSYGSYKSVKDLIAVADAAGRPAKPRTTLYGPVPEERQRAARDSDGHLPELLPVLD.

The interval 1–22 is disordered; it reads MTTSATSGTGPADPAGPTENSM. Radical SAM core domains are found at residues 75-325 and 534-769; these read ITYS…LQAP and VTYI…LLHP. The interval 76–407 is cofG-like; the sequence is TYSKSVFVPL…PRLRPHVAAL (332 aa). Residues C89, C93, C96, C548, C552, and C555 each contribute to the [4Fe-4S] cluster site. The cofH-like stretch occupies residues 511 to 844; sequence EGPALDALCG…KPRTTLYGPV (334 aa). A disordered region spans residues 835–867; that stretch reads KPRTTLYGPVPEERQRAARDSDGHLPELLPVLD. A compositionally biased stretch (basic and acidic residues) spans 845–859; sequence PEERQRAARDSDGHL.

It in the N-terminal section; belongs to the radical SAM superfamily. CofG family. This sequence in the C-terminal section; belongs to the radical SAM superfamily. CofH family. It depends on [4Fe-4S] cluster as a cofactor.

The enzyme catalyses 5-amino-6-(D-ribitylamino)uracil + L-tyrosine + S-adenosyl-L-methionine = 5-amino-5-(4-hydroxybenzyl)-6-(D-ribitylimino)-5,6-dihydrouracil + 2-iminoacetate + 5'-deoxyadenosine + L-methionine + H(+). The catalysed reaction is 5-amino-5-(4-hydroxybenzyl)-6-(D-ribitylimino)-5,6-dihydrouracil + S-adenosyl-L-methionine = 7,8-didemethyl-8-hydroxy-5-deazariboflavin + 5'-deoxyadenosine + L-methionine + NH4(+) + H(+). It participates in cofactor biosynthesis; coenzyme F0 biosynthesis. In terms of biological role, catalyzes the radical-mediated synthesis of 7,8-didemethyl-8-hydroxy-5-deazariboflavin (FO) from 5-amino-6-(D-ribitylamino)uracil and L-tyrosine. This is FO synthase (fbiC) from Streptomyces coelicolor (strain ATCC BAA-471 / A3(2) / M145).